Consider the following 622-residue polypeptide: MRFLLLLAISITYASALSCPEVTLSQRPKHCKKECIADEDCKRNKRCMCDGECGLSCVNPIAMCHPLPNIENGFIRTAGDLRFGSNAEYGCNKGYILVGASQRRCQANKEWSSSQPVCRLQLKCGPPPEIPFAVHDGSSFSGEYDLDAEVAYNCIPGYHKFNAKGLSISKCLLNRKNVAQWFGPDLRCKARACPDPGDIENGLREGDTFEYPHHVKYSCNPGFLLVGSTSRQCSSNGEWTNEPANCKATECSRPSSPLHGKVVGSSLTYQSVVTYSCDHGYRLVGQVQRICLAEGIWGGNEPRCEEIRCSVLPTLPNGYIEGSETSFGAVAVFRCLETMTHEGASKAKCMEDGQWSAPIPRCLASCRVPHIQNGKIRDKSEGQLIASGSKVIVECNKQHEANIDERLICSNSTWSHVPVCSPLSCHNWPPRVPHARILFSKSSHGSIAKYECNNGYHPNRNNQIIKCLYGEWTKDGPPMKCLPSWCEHPSKTYGTLPGGQILLEGILGAYEFQSYIQKVEEGRAISFQCGKGNYLIGPPKATCVNGEWMPKVSPKCVSQTHPMIEGKILWDRKKRSLPGRAVREYVDDELSTHRQHSGKCGIVSGKLERMIMQHSDNGVSVC.

An N-terminal signal peptide occupies residues 1–16 (MRFLLLLAISITYASA). A WAP; atypical domain is found at 17 to 61 (LSCPEVTLSQRPKHCKKECIADEDCKRNKRCMCDGECGLSCVNPI). 19 disulfide bridges follow: cysteine 19–cysteine 49, cysteine 35–cysteine 47, cysteine 41–cysteine 57, cysteine 64–cysteine 105, cysteine 91–cysteine 118, cysteine 124–cysteine 171, cysteine 154–cysteine 188, cysteine 193–cysteine 233, cysteine 219–cysteine 246, cysteine 251–cysteine 291, cysteine 277–cysteine 304, cysteine 309–cysteine 349, cysteine 335–cysteine 362, cysteine 366–cysteine 409, cysteine 395–cysteine 420, cysteine 425–cysteine 467, cysteine 452–cysteine 481, cysteine 486–cysteine 543, and cysteine 529–cysteine 556. 8 consecutive Sushi domains span residues 62–120 (AMCH…VCRL), 122–190 (LKCG…RCKA), 191–248 (RACP…NCKA), 249–306 (TECS…RCEE), 307–364 (IRCS…RCLA), 365–422 (SCRV…VCSP), 423–483 (LSCH…KCLP), and 484–558 (SWCE…KCVS). A glycan (N-linked (GlcNAc...) asparagine) is linked at asparagine 411. The propeptide occupies 576–622 (SLPGRAVREYVDDELSTHRQHSGKCGIVSGKLERMIMQHSDNGVSVC).

Proteolytic processing of the C-terminus is required for clustering activity but not for secretion nor traffic.

Its subcellular location is the synapse. The protein resides in the secreted. Its function is as follows. Scaffolding protein that is necessary to cluster acetylcholine receptors at neuromuscular junctions. The chain is Protein lev-9 (lev-9) from Caenorhabditis elegans.